The sequence spans 578 residues: Proline--tRNA ligase (578 aa).

The protein belongs to the class-II aminoacyl-tRNA synthetase family. ProS type 1 subfamily. As to quaternary structure, homodimer.

It is found in the cytoplasm. The catalysed reaction is tRNA(Pro) + L-proline + ATP = L-prolyl-tRNA(Pro) + AMP + diphosphate. Catalyzes the attachment of proline to tRNA(Pro) in a two-step reaction: proline is first activated by ATP to form Pro-AMP and then transferred to the acceptor end of tRNA(Pro). As ProRS can inadvertently accommodate and process non-cognate amino acids such as alanine and cysteine, to avoid such errors it has two additional distinct editing activities against alanine. One activity is designated as 'pretransfer' editing and involves the tRNA(Pro)-independent hydrolysis of activated Ala-AMP. The other activity is designated 'posttransfer' editing and involves deacylation of mischarged Ala-tRNA(Pro). The misacylated Cys-tRNA(Pro) is not edited by ProRS. In Paraburkholderia phymatum (strain DSM 17167 / CIP 108236 / LMG 21445 / STM815) (Burkholderia phymatum), this protein is Proline--tRNA ligase.